A 228-amino-acid polypeptide reads, in one-letter code: Urease accessory protein UreF 1 (228 aa).

It belongs to the UreF family. In terms of assembly, ureD, UreF and UreG form a complex that acts as a GTP-hydrolysis-dependent molecular chaperone, activating the urease apoprotein by helping to assemble the nickel containing metallocenter of UreC. The UreE protein probably delivers the nickel.

It is found in the cytoplasm. Its function is as follows. Required for maturation of urease via the functional incorporation of the urease nickel metallocenter. This is Urease accessory protein UreF 1 from Brucella anthropi (strain ATCC 49188 / DSM 6882 / CCUG 24695 / JCM 21032 / LMG 3331 / NBRC 15819 / NCTC 12168 / Alc 37) (Ochrobactrum anthropi).